We begin with the raw amino-acid sequence, 525 residues long: Lymphocyte activation gene 3 protein (525 aa).

A signal peptide spans methionine 1–serine 23. Residues glycine 24 to leucine 442 are Extracellular-facing. Residues glycine 37–glycine 163 form the Ig-like V-type domain. Positions glycine 37–serine 246 are interaction with FGL1. The cysteines at positions 44 and 156 are disulfide-linked. 3 Ig-like C2-type domains span residues glutamine 164–serine 246, proline 258–threonine 341, and isoleucine 345–lysine 412. N-linked (GlcNAc...) asparagine glycosylation is present at asparagine 184. Cysteine 185 and cysteine 235 are oxidised to a cystine. 2 N-linked (GlcNAc...) asparagine glycosylation sites follow: asparagine 244 and asparagine 309. Cystine bridges form between cysteine 276–cysteine 327 and cysteine 363–cysteine 405. The connecting peptide stretch occupies residues glutamate 422–leucine 442. The chain crosses the membrane as a helical span at residues phenylalanine 443–phenylalanine 463. Over histidine 464 to leucine 525 the chain is Cytoplasmic. The segment at proline 486–leucine 525 is disordered. Residues lysine 490–glutamate 495 carry the KIEELE motif motif. The span at lysine 490–glutamate 499 shows a compositional bias: basic and acidic residues. Residues glutamate 493–serine 522 are 15 X 2 AA tandem repeats of E-X. Residues threonine 500–glutamate 519 are compositionally biased toward acidic residues.

The protein belongs to the LAG3 family. Interacts with MHC class II (MHC-II); selectively recognizes stable complexes of peptide and MHC-II. Interacts with FGL1 (via the Fibrinogen C-terminal domain). Post-translationally, proteolytically cleaved by ADAM10 and ADAM17 within the connecting peptide region, leading to release of Secreted lymphocyte activation gene 3 protein (sLAG-3). ADAM10 mediates constitutive cleavage, but cleavage increases following T-cell activation, whereas shedding by ADAM17 is induced by TCR signaling in a PRKCQ-dependent manner.

The protein resides in the cell membrane. It localises to the secreted. Its function is as follows. Lymphocyte activation gene 3 protein: Inhibitory receptor on antigen activated T-cells. Delivers inhibitory signals upon binding to ligands, such as FGL1. FGL1 constitutes a major ligand of LAG3 and is responsible for LAG3 T-cell inhibitory function. Following TCR engagement, LAG3 associates with CD3-TCR in the immunological synapse and directly inhibits T-cell activation. May inhibit antigen-specific T-cell activation in synergy with PDCD1/PD-1, possibly by acting as a coreceptor for PDCD1/PD-1. Negatively regulates the proliferation, activation, effector function and homeostasis of both CD8(+) and CD4(+) T-cells. Also mediates immune tolerance: constitutively expressed on a subset of regulatory T-cells (Tregs) and contributes to their suppressive function. Also acts as a negative regulator of plasmacytoid dendritic cell (pDCs) activation. Binds MHC class II (MHC-II); the precise role of MHC-II-binding is however unclear. May function as a ligand for MHC class II (MHC-II) on antigen-presenting cells (APC), promoting APC activation/maturation and driving Th1 immune response. The sequence is that of Lymphocyte activation gene 3 protein (Lag3) from Rattus norvegicus (Rat).